The sequence spans 72 residues: MKQGIHPKYETLKVSCSCGHTFETRSTRSEDLHLDVCSECHPFYTGKQRVMDTGGRVDKFKKRFGALGKKDS.

4 residues coordinate Zn(2+): Cys-16, Cys-18, Cys-37, and Cys-40.

Belongs to the bacterial ribosomal protein bL31 family. Type A subfamily. In terms of assembly, part of the 50S ribosomal subunit. It depends on Zn(2+) as a cofactor.

Binds the 23S rRNA. The polypeptide is Large ribosomal subunit protein bL31 (Idiomarina loihiensis (strain ATCC BAA-735 / DSM 15497 / L2-TR)).